A 338-amino-acid chain; its full sequence is Holliday junction branch migration complex subunit RuvB (338 aa).

The tract at residues 1 to 181 is large ATPase domain (RuvB-L); sequence MEERILTQNF…FGVINRLDYY (181 aa). ATP is bound by residues leucine 20, arginine 21, glycine 62, lysine 65, threonine 66, threonine 67, 128-130, arginine 171, tyrosine 181, and arginine 218; that span reads EDF. Position 66 (threonine 66) interacts with Mg(2+). Positions 182 to 252 are small ATPAse domain (RuvB-S); the sequence is SVEELKEIIK…TANIALNMLG (71 aa). The tract at residues 255–338 is head domain (RuvB-H); the sequence is EMGLEEIDRK…YVEQRRIEDV (84 aa). The DNA site is built by arginine 310 and arginine 315.

This sequence belongs to the RuvB family. In terms of assembly, homohexamer. Forms an RuvA(8)-RuvB(12)-Holliday junction (HJ) complex. HJ DNA is sandwiched between 2 RuvA tetramers; dsDNA enters through RuvA and exits via RuvB. An RuvB hexamer assembles on each DNA strand where it exits the tetramer. Each RuvB hexamer is contacted by two RuvA subunits (via domain III) on 2 adjacent RuvB subunits; this complex drives branch migration. In the full resolvosome a probable DNA-RuvA(4)-RuvB(12)-RuvC(2) complex forms which resolves the HJ.

It is found in the cytoplasm. The catalysed reaction is ATP + H2O = ADP + phosphate + H(+). In terms of biological role, the RuvA-RuvB-RuvC complex processes Holliday junction (HJ) DNA during genetic recombination and DNA repair, while the RuvA-RuvB complex plays an important role in the rescue of blocked DNA replication forks via replication fork reversal (RFR). RuvA specifically binds to HJ cruciform DNA, conferring on it an open structure. The RuvB hexamer acts as an ATP-dependent pump, pulling dsDNA into and through the RuvAB complex. RuvB forms 2 homohexamers on either side of HJ DNA bound by 1 or 2 RuvA tetramers; 4 subunits per hexamer contact DNA at a time. Coordinated motions by a converter formed by DNA-disengaged RuvB subunits stimulates ATP hydrolysis and nucleotide exchange. Immobilization of the converter enables RuvB to convert the ATP-contained energy into a lever motion, pulling 2 nucleotides of DNA out of the RuvA tetramer per ATP hydrolyzed, thus driving DNA branch migration. The RuvB motors rotate together with the DNA substrate, which together with the progressing nucleotide cycle form the mechanistic basis for DNA recombination by continuous HJ branch migration. Branch migration allows RuvC to scan DNA until it finds its consensus sequence, where it cleaves and resolves cruciform DNA. The sequence is that of Holliday junction branch migration complex subunit RuvB from Caldanaerobacter subterraneus subsp. tengcongensis (strain DSM 15242 / JCM 11007 / NBRC 100824 / MB4) (Thermoanaerobacter tengcongensis).